Consider the following 224-residue polypeptide: ATP-dependent dethiobiotin synthetase BioD (224 aa).

Residue T18 participates in Mg(2+) binding. K39 is a catalytic residue. S43 is a binding site for substrate. D56 and E117 together coordinate Mg(2+). Residues D56, 117 to 120 (EGVG), and 177 to 178 (NE) each bind ATP.

This sequence belongs to the dethiobiotin synthetase family. As to quaternary structure, homodimer. Requires Mg(2+) as cofactor.

The protein localises to the cytoplasm. It catalyses the reaction (7R,8S)-7,8-diammoniononanoate + CO2 + ATP = (4R,5S)-dethiobiotin + ADP + phosphate + 3 H(+). It participates in cofactor biosynthesis; biotin biosynthesis; biotin from 7,8-diaminononanoate: step 1/2. Functionally, catalyzes a mechanistically unusual reaction, the ATP-dependent insertion of CO2 between the N7 and N8 nitrogen atoms of 7,8-diaminopelargonic acid (DAPA, also called 7,8-diammoniononanoate) to form a ureido ring. In Xanthomonas oryzae pv. oryzae (strain MAFF 311018), this protein is ATP-dependent dethiobiotin synthetase BioD.